The sequence spans 217 residues: Probable transaldolase (217 aa).

Lysine 85 acts as the Schiff-base intermediate with substrate in catalysis.

The protein belongs to the transaldolase family. Type 3B subfamily.

The protein localises to the cytoplasm. It catalyses the reaction D-sedoheptulose 7-phosphate + D-glyceraldehyde 3-phosphate = D-erythrose 4-phosphate + beta-D-fructose 6-phosphate. Its pathway is carbohydrate degradation; pentose phosphate pathway; D-glyceraldehyde 3-phosphate and beta-D-fructose 6-phosphate from D-ribose 5-phosphate and D-xylulose 5-phosphate (non-oxidative stage): step 2/3. In terms of biological role, transaldolase is important for the balance of metabolites in the pentose-phosphate pathway. The polypeptide is Probable transaldolase (Lachnoclostridium phytofermentans (strain ATCC 700394 / DSM 18823 / ISDg) (Clostridium phytofermentans)).